The sequence spans 292 residues: Small ribosomal subunit protein uS2 (292 aa).

The disordered stretch occupies residues 265-292 (TETALDWSDEPVAGDWAAEPAADAQGGW). The span at 277–292 (AGDWAAEPAADAQGGW) shows a compositional bias: low complexity.

It belongs to the universal ribosomal protein uS2 family. In terms of assembly, component of the small ribosomal subunit. Mature ribosomes consist of a small (40S) and a large (60S) subunit. The 40S subunit contains about 33 different proteins and 1 molecule of RNA (18S). The 60S subunit contains about 49 different proteins and 3 molecules of RNA (25S, 5.8S and 5S). Interacts with RPS21.

It is found in the cytoplasm. Functionally, required for the assembly and/or stability of the 40S ribosomal subunit. Required for the processing of the 20S rRNA-precursor to mature 18S rRNA in a late step of the maturation of 40S ribosomal subunits. This Cryptococcus neoformans var. neoformans serotype D (strain B-3501A) (Filobasidiella neoformans) protein is Small ribosomal subunit protein uS2.